The chain runs to 467 residues: Cytochrome P450 monooxygenase azaI (467 aa).

Residues 1 to 28 (MESLAQLPGIFLPLAGCVLALSLSALLA) form the signal peptide. Heme is bound at residue C411.

The protein belongs to the cytochrome P450 family. Requires heme as cofactor.

The protein operates within secondary metabolite biosynthesis. In terms of biological role, cytochrome P450 monooxygenase; part of the gene cluster that mediates the biosynthesis of azaphilones, a class of fungal metabolites characterized by a highly oxygenated pyrano-quinone bicyclic core and exhibiting a broad range of bioactivities. In the first step, the non-reducing polyketide synthase azaA forms the hexaketide precursor from successive condensations of five malonyl-CoA units, presumably with a simple acetyl-CoA starter unit. The reactive polyketide chain then undergoes a PT-mediated C2-C7 cyclization to afford the aromatic ring and is eventually released as an aldehyde through the R-domain. The putative ketoreductase azaE is proposed to catalyze the reduction of the terminal ketone resulting in the early culture product FK17-P2a. The monooxygenase azaH was demonstrated to be the only enzyme required to convert FK17-P2a to azanigerone E. AzaH first hydroxylates the benzaldehyde intermediate FK17-P2a at C4, which triggers the formation of the pyran-ring to afford azanigerone E. In parallel, the 2,4-dimethylhexanoyl chain is synthesized by the HR-PKS azaB and is proposed to be transferred to the C4-hydroxyl of azanigerone E by the acyltransferase azaD directly from the ACP domain of azaB. Alternatively, the 2,4-dimethyl-hexanoyl chain may be offloaded from the HR-PKS as a carboxylic acid and converted to an acyl-CoA by azaF. The resulting acyl-CoA molecule could then be taken up as a substrate by AzaD to form azanigerone B. To yield the carboxylic acid substituent in azanigerone A, the hydroxypropyl side chain of azanigerone B would need to undergo a C-C oxidative cleavage catalyzed by cytochrome P450 AzaI. AzaI is proposed to act on a vicinal diol that leads to a C-C bond scission either through an alkoxyradical intermediate or a peroxy complex. In the biosynthesis of azanigerone A, azanigerone B first undergoes hydroxylation at C10, possibly catalyzed by one of the two FAD-dependent monooxygenases encoded in the cluster, azaG or azaL, resulting in the vicinal diol azanigerone C. Oxidative cleavage of azanigerone C by azaI would yield the corresponding aldehyde derivative of azanigerone A. Finally, the dehydrogenase azaJ is proposed to convert the aldehyde functional group into the carboxylic acid, completing the conversion from azanigerone B to azanigerone A. Alternatively, the oxidation of aldehyde to carboxylic acid may be catalyzed by the same P450 enzyme azaI via consecutive oxidation or by endogenous alcohol dehydrogenase. This is Cytochrome P450 monooxygenase azaI from Aspergillus niger (strain ATCC 1015 / CBS 113.46 / FGSC A1144 / LSHB Ac4 / NCTC 3858a / NRRL 328 / USDA 3528.7).